A 52-amino-acid polypeptide reads, in one-letter code: Light-harvesting protein B-870 alpha chain (52 aa).

Residues 1–15 (MAKFYKIWLIFDPRR) lie on the Cytoplasmic side of the membrane. The chain crosses the membrane as a helical span at residues 16 to 36 (VFVAQGVFLFLLAAMIHLVVL). Position 32 (H32) interacts with a bacteriochlorophyll. Topologically, residues 37 to 52 (SSGLNWFEAAAAVGGQ) are periplasmic.

Belongs to the antenna complex alpha subunit family. The core complex is formed by different alpha and beta chains, binding bacteriochlorophyll molecules, and arranged most probably in tetrameric structures disposed around the reaction center. The non-pigmented gamma chains may constitute additional components.

The protein localises to the cell inner membrane. In terms of biological role, antenna complexes are light-harvesting systems, which transfer the excitation energy to the reaction centers. The sequence is that of Light-harvesting protein B-870 alpha chain (pufA) from Roseobacter denitrificans (strain ATCC 33942 / OCh 114) (Erythrobacter sp. (strain OCh 114)).